Here is a 404-residue protein sequence, read N- to C-terminus: Diphosphomevalonate decarboxylase mvd1 (404 aa).

(R)-5-diphosphomevalonate is bound by residues 25-28 (YWGK), arginine 82, 161-166 (SGSACR), and threonine 217.

Belongs to the diphosphomevalonate decarboxylase family. As to quaternary structure, homodimer.

The enzyme catalyses (R)-5-diphosphomevalonate + ATP = isopentenyl diphosphate + ADP + phosphate + CO2. Its pathway is isoprenoid biosynthesis; isopentenyl diphosphate biosynthesis via mevalonate pathway; isopentenyl diphosphate from (R)-mevalonate: step 3/3. Functionally, diphosphomevalonate decarboxylase; part of the second module of ergosterol biosynthesis pathway that includes the middle steps of the pathway. Mvd1 converts diphosphomevalonate into isopentenyl diphosphate. The second module is carried out in the vacuole and involves the formation of farnesyl diphosphate, which is also an important intermediate in the biosynthesis of ubiquinone, dolichol, heme and prenylated proteins. Activity by the mevalonate kinase erg12 (AFUA_4G07780) first converts mevalonate into 5-phosphomevalonate. 5-phosphomevalonate is then further converted to 5-diphosphomevalonate by the phosphomevalonate kinase erg8 (AFUA_5G10680). The diphosphomevalonate decarboxylase mvd1 (AFUA_4G07130) then produces isopentenyl diphosphate. The isopentenyl-diphosphate delta-isomerase idi1 (AFUA_6G11160) then catalyzes the 1,3-allylic rearrangement of the homoallylic substrate isopentenyl (IPP) to its highly electrophilic allylic isomer, dimethylallyl diphosphate (DMAPP). Finally the farnesyl diphosphate synthase erg20 (AFUA_5G02450) catalyzes the sequential condensation of isopentenyl pyrophosphate with dimethylallyl pyrophosphate, and then with the resultant geranylpyrophosphate to the ultimate product farnesyl pyrophosphate. The protein is Diphosphomevalonate decarboxylase mvd1 of Aspergillus fumigatus (strain ATCC MYA-4609 / CBS 101355 / FGSC A1100 / Af293) (Neosartorya fumigata).